We begin with the raw amino-acid sequence, 94 residues long: Co-chaperonin GroES (94 aa).

It belongs to the GroES chaperonin family. As to quaternary structure, heptamer of 7 subunits arranged in a ring. Interacts with the chaperonin GroEL.

The protein resides in the cytoplasm. Functionally, together with the chaperonin GroEL, plays an essential role in assisting protein folding. The GroEL-GroES system forms a nano-cage that allows encapsulation of the non-native substrate proteins and provides a physical environment optimized to promote and accelerate protein folding. GroES binds to the apical surface of the GroEL ring, thereby capping the opening of the GroEL channel. This chain is Co-chaperonin GroES, found in Staphylococcus epidermidis.